A 182-amino-acid chain; its full sequence is CASP-like protein 2B1 (182 aa).

Over 1-12 (MKLIDRRMRLTE) the chain is Cytoplasmic. Residues 13–31 (LLLRCSISVFALLALILVV) traverse the membrane as a helical segment. At 32 to 52 (TDTEVKLIFTIKKTAKYTDMK) the chain is on the extracellular side. Residues 53–73 (AVVFLVVANGIAAVYSLLQSV) form a helical membrane-spanning segment. Over 74–89 (RCVVGTMKGRVLFSKP) the chain is Cytoplasmic. Residues 90–110 (LAWAFFSGDQAMAYLNVAAIA) traverse the membrane as a helical segment. The Extracellular segment spans residues 111 to 141 (ATAESGVIAREGEEDLQWMRVCNMYGKFCNQ). A helical transmembrane segment spans residues 142-162 (MAIGVSSALLASIAMVFVSCI). The Cytoplasmic segment spans residues 163 to 182 (SAFSLFRLYGATRDRRTTPW).

This sequence belongs to the Casparian strip membrane proteins (CASP) family. As to quaternary structure, homodimer and heterodimers.

It is found in the cell membrane. The protein is CASP-like protein 2B1 of Arabidopsis lyrata subsp. lyrata (Lyre-leaved rock-cress).